Here is a 441-residue protein sequence, read N- to C-terminus: VGFKAGVKDYKLTYYTPDYQTKATDILAAFRVTPQPGVPPEEAGAAVAAESSTGTWTTVWTDGLTSLDRYKGRCYHIEPVAGEENQYIAYVAYPLDLFEEGSVTNMFTSIVGNVFGFKALRALRLEDLRIPPAYSKTFQGPPHGIQVERDKLNKYGRPLLGCTIKPKLGLSAKNYGRAVYECLRGGLDFTKDDENVNSQPFMRWRDRFLFCAEAIYKAQAETGEIKGHYLNATAGTCEEMTKRAVFARELGVPIVMHDYLTGGFTANTSLAHYCRDNGLLLHIHRAMHAVIDRQKNHGIHFRVLAKALRMSGGDHIHSGTVVGKLEGERDITLGFVDLLREEYIEKDRSRGIYFSQDWVSLPGVLPVASGGIHVWHMPALTEIFGDDSVLQFGGGTLGHPWGNRPGAVANRVALEACVQARNEGRDLAREGNEIIPVASKW.

Lys4 bears the N6,N6,N6-trimethyllysine mark. Substrate-binding residues include Asn113 and Thr163. Lys165 serves as the catalytic Proton acceptor. Lys167 lines the substrate pocket. Mg(2+) is bound by residues Lys191, Asp193, and Glu194. Position 191 is an N6-carboxylysine (Lys191). The active-site Proton acceptor is the His284. Residues Arg285, His317, and Ser369 each coordinate substrate.

It belongs to the RuBisCO large chain family. Type I subfamily. As to quaternary structure, heterohexadecamer of 8 large chains and 8 small chains; disulfide-linked. The disulfide link is formed within the large subunit homodimers. The cofactor is Mg(2+). Post-translationally, the disulfide bond which can form in the large chain dimeric partners within the hexadecamer appears to be associated with oxidative stress and protein turnover.

The protein resides in the plastid. Its subcellular location is the chloroplast. The catalysed reaction is 2 (2R)-3-phosphoglycerate + 2 H(+) = D-ribulose 1,5-bisphosphate + CO2 + H2O. The enzyme catalyses D-ribulose 1,5-bisphosphate + O2 = 2-phosphoglycolate + (2R)-3-phosphoglycerate + 2 H(+). Its function is as follows. RuBisCO catalyzes two reactions: the carboxylation of D-ribulose 1,5-bisphosphate, the primary event in carbon dioxide fixation, as well as the oxidative fragmentation of the pentose substrate in the photorespiration process. Both reactions occur simultaneously and in competition at the same active site. The protein is Ribulose bisphosphate carboxylase large chain of Heliamphora nutans (Venezuelan marsh pitcher plant).